A 184-amino-acid polypeptide reads, in one-letter code: Cytidylate kinase (184 aa).

8–16 (GQPGSGKTT) lines the ATP pocket.

This sequence belongs to the cytidylate kinase family. Type 2 subfamily.

It localises to the cytoplasm. The catalysed reaction is CMP + ATP = CDP + ADP. It catalyses the reaction dCMP + ATP = dCDP + ADP. The chain is Cytidylate kinase from Pyrobaculum aerophilum (strain ATCC 51768 / DSM 7523 / JCM 9630 / CIP 104966 / NBRC 100827 / IM2).